The sequence spans 1214 residues: Delta-latroinsectotoxin-Lt1a (1214 aa).

Residues isoleucine 64–serine 89 form a helix H2 is the probable transmembrane region of the tetrameric pore inserted in the target cell membrane region. The tract at residues alanine 250–leucine 269 is helix H8 is the probable transmembrane region of the tetrameric pore inserted in the target cell membrane. ANK repeat units lie at residues aspartate 464–alanine 497, asparagine 501–leucine 532, asparagine 536–alanine 565, threonine 570–glutamate 600, aspartate 604–alanine 633, serine 637–isoleucine 666, asparagine 670–isoleucine 699, asparagine 706–leucine 734, glycine 740–glutamate 769, glutamate 773–alanine 802, aspartate 806–alanine 835, aspartate 839–glutamate 868, asparagine 872–aspartate 901, glutamate 906–glutamate 936, and valine 966–serine 994. Residues isoleucine 1020 to arginine 1214 constitute a propeptide, C-terminal domain cleavage is required for toxin activation.

It belongs to the cationic peptide 01 (latrotoxin) family. 04 (delta-latroinsectotoxin) subfamily. As to quaternary structure, homotetramer in membrane. Expressed by the venom gland.

The protein resides in the secreted. Its subcellular location is the target cell membrane. Insecticidal presynaptic neurotoxin that induces massive neurotransmitter release at insect (but not vertebrate) neuromuscular junctions. Native toxin forms cation-permeable pores (with high permeability to calcium) in lipid membranes locust muscle membrane and artificial lipid bilayers. May bind to insect neurexin-1 homolog, insect adhesion G protein-coupled receptor L1 homolog, and insect receptor-type tyrosine-protein phosphatase S homolog, and induces neurotransmitter exocytosis both by forming tetrameric pores in membranes and signaling via G protein-coupled receptor. Oligomerization is a process independent of divalent cations. The sequence is that of Delta-latroinsectotoxin-Lt1a from Latrodectus tredecimguttatus (Mediterranean black widow spider).